The following is a 170-amino-acid chain: Phosphopantetheine adenylyltransferase (170 aa).

Thr10 serves as a coordination point for substrate. ATP-binding positions include 10–11 (TF) and His18. 3 residues coordinate substrate: Lys42, Leu75, and Arg89. Residues 90–92 (GVR), Glu100, and 125–131 (YTYVASS) each bind ATP.

The protein belongs to the bacterial CoaD family. Homohexamer. Requires Mg(2+) as cofactor.

Its subcellular location is the cytoplasm. It catalyses the reaction (R)-4'-phosphopantetheine + ATP + H(+) = 3'-dephospho-CoA + diphosphate. It participates in cofactor biosynthesis; coenzyme A biosynthesis; CoA from (R)-pantothenate: step 4/5. Reversibly transfers an adenylyl group from ATP to 4'-phosphopantetheine, yielding dephospho-CoA (dPCoA) and pyrophosphate. The chain is Phosphopantetheine adenylyltransferase from Chlorobium limicola (strain DSM 245 / NBRC 103803 / 6330).